Consider the following 163-residue polypeptide: Phosphopantetheine adenylyltransferase (163 aa).

Substrate is bound at residue Ser11. Residues 11–12 and His19 each bind ATP; that span reads SF. The substrate site is built by Lys43, Ala76, and Arg90. Residues 91–93, Glu101, and 126–132 contribute to the ATP site; these read GLR and WQALSSS.

The protein belongs to the bacterial CoaD family. As to quaternary structure, homohexamer. Mg(2+) is required as a cofactor.

It localises to the cytoplasm. The enzyme catalyses (R)-4'-phosphopantetheine + ATP + H(+) = 3'-dephospho-CoA + diphosphate. Its pathway is cofactor biosynthesis; coenzyme A biosynthesis; CoA from (R)-pantothenate: step 4/5. Its function is as follows. Reversibly transfers an adenylyl group from ATP to 4'-phosphopantetheine, yielding dephospho-CoA (dPCoA) and pyrophosphate. The protein is Phosphopantetheine adenylyltransferase of Streptococcus pyogenes serotype M2 (strain MGAS10270).